We begin with the raw amino-acid sequence, 239 residues long: Ribosomal RNA large subunit methyltransferase E (239 aa).

The interval 1–20 (MTKAPIAGNRTGRKLGQRVK) is disordered. Residues 11-20 (TGRKLGQRVK) are compositionally biased toward basic residues. Residues Gly-81, Trp-83, Asp-104, Asp-120, and Asp-144 each contribute to the S-adenosyl-L-methionine site. Lys-184 acts as the Proton acceptor in catalysis.

The protein belongs to the class I-like SAM-binding methyltransferase superfamily. RNA methyltransferase RlmE family.

It is found in the cytoplasm. The enzyme catalyses uridine(2552) in 23S rRNA + S-adenosyl-L-methionine = 2'-O-methyluridine(2552) in 23S rRNA + S-adenosyl-L-homocysteine + H(+). Functionally, specifically methylates the uridine in position 2552 of 23S rRNA at the 2'-O position of the ribose in the fully assembled 50S ribosomal subunit. The polypeptide is Ribosomal RNA large subunit methyltransferase E (Rhizobium etli (strain ATCC 51251 / DSM 11541 / JCM 21823 / NBRC 15573 / CFN 42)).